Reading from the N-terminus, the 282-residue chain is Nucleotide-binding protein XAC2976 (282 aa).

5–12 contributes to the ATP binding site; sequence GLSGSGKS. 57-60 is a GTP binding site; sequence DVRS.

It belongs to the RapZ-like family.

In terms of biological role, displays ATPase and GTPase activities. The polypeptide is Nucleotide-binding protein XAC2976 (Xanthomonas axonopodis pv. citri (strain 306)).